Here is a 236-residue protein sequence, read N- to C-terminus: MKKPLLLTLLCMILAGCDNPKSLESFTPEMASFSNEFDFDPLRGPVKDFSQTLMSENGEVAKQVTGTLSQEGCFDTLELHDLENNTGLALVLDANYYRDAQTLEKKVQLQGKCQLAALPSAGVTWETDDNGFVVSATGKEMKVEYRYDSEGYPLGKTTINSQNTLSVTAKPSADPRKKLDYTAVSRVDDRQVGNVTQSCEYDAYANPVDCRLVIVDESVKPAVSHHYTIKNRIDYY.

The N-terminal stretch at M1–G16 is a signal peptide. The N-palmitoyl cysteine moiety is linked to residue C17. A lipid anchor (S-diacylglycerol cysteine) is attached at C17.

The protein belongs to the UPF0257 family.

It is found in the cell membrane. The protein is UPF0257 lipoprotein YnfC of Salmonella schwarzengrund (strain CVM19633).